Reading from the N-terminus, the 245-residue chain is Small ribosomal subunit protein uS3 (245 aa).

The 69-residue stretch at 38 to 106 (IRKYLNTRLA…EVQINIFEIK (69 aa)) folds into the KH type-2 domain. Positions 225–245 (YEGSGDKSVKRRKRNGIKKNE) are disordered. A compositionally biased stretch (basic residues) spans 233-245 (VKRRKRNGIKKNE).

This sequence belongs to the universal ribosomal protein uS3 family. As to quaternary structure, part of the 30S ribosomal subunit. Forms a tight complex with proteins S10 and S14.

Binds the lower part of the 30S subunit head. Binds mRNA in the 70S ribosome, positioning it for translation. The sequence is that of Small ribosomal subunit protein uS3 from Azobacteroides pseudotrichonymphae genomovar. CFP2.